The chain runs to 196 residues: Probable malonic semialdehyde reductase RutE (196 aa).

It belongs to the nitroreductase family. HadB/RutE subfamily. Requires FMN as cofactor.

The enzyme catalyses 3-hydroxypropanoate + NADP(+) = 3-oxopropanoate + NADPH + H(+). Its function is as follows. May reduce toxic product malonic semialdehyde to 3-hydroxypropionic acid, which is excreted. This chain is Probable malonic semialdehyde reductase RutE, found in Escherichia coli O7:K1 (strain IAI39 / ExPEC).